Reading from the N-terminus, the 740-residue chain is Ribulose bisphosphate carboxylase, chloroplastic (740 aa).

The N-terminal 55 residues, 1–55 (MPSSSFTTGLALGAGALVGANAFVAPTAKTTNLRAPTQEASLQVAASQQTEQPAP), are a transit peptide targeting the chloroplast. The helical transmembrane segment at 56–76 (STSALPWAFGAGACLALAAGG) threads the bilayer. Asparagine 213 is a binding site for substrate. Lysine 268 serves as the catalytic Proton acceptor. Lysine 270 contributes to the substrate binding site. Positions 293, 295, and 296 each coordinate Mg(2+). Residue lysine 293 is modified to N6-carboxylysine. The active-site Proton acceptor is the histidine 389. Substrate is bound by residues arginine 390, histidine 423, and serine 470.

Belongs to the RuBisCO large chain family. Type II subfamily. In terms of assembly, homodimer. Requires Mg(2+) as cofactor.

It is found in the plastid. It localises to the chloroplast membrane. The catalysed reaction is 2 (2R)-3-phosphoglycerate + 2 H(+) = D-ribulose 1,5-bisphosphate + CO2 + H2O. It carries out the reaction D-ribulose 1,5-bisphosphate + O2 = 2-phosphoglycolate + (2R)-3-phosphoglycerate + 2 H(+). RuBisCO catalyzes two reactions: the carboxylation of D-ribulose 1,5-bisphosphate, the primary event in carbon dioxide fixation, as well as the oxidative fragmentation of the pentose substrate. Both reactions occur simultaneously and in competition at the same active site. The polypeptide is Ribulose bisphosphate carboxylase, chloroplastic (rbcL) (Heterocapsa triquetra (Dinoflagellate)).